The primary structure comprises 625 residues: DNA-directed RNA polymerase subunit gamma (625 aa).

Zn(2+) is bound by residues Cys-71, Cys-73, Cys-86, and Cys-89. Residues Asp-467, Asp-469, and Asp-471 each contribute to the Mg(2+) site.

It belongs to the RNA polymerase beta' chain family. RpoC1 subfamily. In terms of assembly, in cyanobacteria the RNAP catalytic core is composed of 2 alpha, 1 beta, 1 beta', 1 gamma and 1 omega subunit. When a sigma factor is associated with the core the holoenzyme is formed, which can initiate transcription. The cofactor is Mg(2+). Zn(2+) is required as a cofactor.

It carries out the reaction RNA(n) + a ribonucleoside 5'-triphosphate = RNA(n+1) + diphosphate. In terms of biological role, DNA-dependent RNA polymerase catalyzes the transcription of DNA into RNA using the four ribonucleoside triphosphates as substrates. The polypeptide is DNA-directed RNA polymerase subunit gamma (Trichormus variabilis (strain ATCC 29413 / PCC 7937) (Anabaena variabilis)).